Reading from the N-terminus, the 277-residue chain is Sarcosine/dimethylglycine N-methyltransferase (277 aa).

The protein belongs to the methyltransferase superfamily. As to quaternary structure, monomer.

It catalyses the reaction sarcosine + 2 S-adenosyl-L-methionine = glycine betaine + 2 S-adenosyl-L-homocysteine + 2 H(+). The catalysed reaction is sarcosine + S-adenosyl-L-methionine = N,N-dimethylglycine + S-adenosyl-L-homocysteine + H(+). The enzyme catalyses N,N-dimethylglycine + S-adenosyl-L-methionine = glycine betaine + S-adenosyl-L-homocysteine + H(+). The protein operates within amine and polyamine biosynthesis; betaine biosynthesis via glycine pathway; betaine from glycine: step 2/3. It participates in amine and polyamine biosynthesis; betaine biosynthesis via glycine pathway; betaine from glycine: step 3/3. With respect to regulation, inhibited by n-butylic acid and S-adenosyl-L-homocysteine. Catalyzes the methylation of sarcosine and dimethylglycine to dimethylglycine and betaine, respectively, with S-adenosylmethionine (AdoMet) acting as the methyl donor. Activity with sarcosine is much weaker than activity with dimethylglycine. The sequence is that of Sarcosine/dimethylglycine N-methyltransferase from Aphanothece halophytica.